The chain runs to 1485 residues: DNA topoisomerase 2 (1485 aa).

A compositionally biased stretch (acidic residues) spans 1-16 (MSIDADFSDYEDEASG). The interval 1–76 (MSIDADFSDY…NGNGNSNVST (76 aa)) is disordered. The segment covering 46 to 59 (DLRQTSLTSMTASE) has biased composition (polar residues). Residues 64 to 76 (VTNNGNGNSNVST) show a composition bias toward low complexity. ATP contacts are provided by residues asparagine 136, asparagine 165, 193-195 (SSN), and 206-213 (GRNGYGAK). An interaction with DNA region spans residues 388 to 392 (KKENK). An ATP-binding site is contributed by 421-423 (QTK). The Toprim domain occupies 499–613 (CVLILTEGDS…SLLQIPGFLI (115 aa)). Residues glutamate 505, aspartate 582, and aspartate 584 each contribute to the Mg(2+) site. Residues 745-1195 (IPSVVDGLKP…TPKELWLHDL (451 aa)) form the Topo IIA-type catalytic domain. The active-site O-(5'-phospho-DNA)-tyrosine intermediate is the tyrosine 835. Residues 1019 to 1028 (KLSRTQATSN) are interaction with DNA. Residues 1216–1225 (EEQSSRDFVN) show a composition bias toward basic and acidic residues. Residues 1216–1485 (EEQSSRDFVN…EDVDDYDESD (270 aa)) form a disordered region. Positions 1226 to 1242 (RTKKKPRGKSTGTRKPR) are enriched in basic residues. Over residues 1260 to 1273 (ESKPSTTNRKQQTL) the composition is skewed to polar residues. Residues 1278–1307 (ASKEPEKSSDINIVKTEDNSHGLSVEENRI) are compositionally biased toward basic and acidic residues. Serine 1310 and serine 1345 each carry phosphoserine. A compositionally biased stretch (basic residues) spans 1387–1396 (AKNKGKKASS). Positions 1413–1425 (GSSSTPKASSTNA) are enriched in polar residues. Serine 1433 is modified (phosphoserine). Positions 1473 to 1485 (DNDEDVDDYDESD) are enriched in acidic residues.

Belongs to the type II topoisomerase family. Homodimer. Mg(2+) is required as a cofactor. The cofactor is Mn(2+). Ca(2+) serves as cofactor. Post-translationally, phosphorylated at multiple sites at both extremities of the protein.

It is found in the nucleus. The catalysed reaction is ATP-dependent breakage, passage and rejoining of double-stranded DNA.. In terms of biological role, control of topological states of DNA by transient breakage and subsequent rejoining of DNA strands. Topoisomerase II makes double-strand breaks. This chain is DNA topoisomerase 2 (top2), found in Schizosaccharomyces pombe (strain 972 / ATCC 24843) (Fission yeast).